Reading from the N-terminus, the 443-residue chain is Probable D-serine dehydratase (443 aa).

Residue Lys118 is modified to N6-(pyridoxal phosphate)lysine.

Belongs to the serine/threonine dehydratase family. DsdA subfamily. It depends on pyridoxal 5'-phosphate as a cofactor.

The catalysed reaction is D-serine = pyruvate + NH4(+). This chain is Probable D-serine dehydratase, found in Colwellia psychrerythraea (strain 34H / ATCC BAA-681) (Vibrio psychroerythus).